We begin with the raw amino-acid sequence, 42 residues long: Photosystem I reaction center subunit IX (42 aa).

A helical membrane pass occupies residues 7-27 (YLSVAPVLSTLWFGALAGLLI).

This sequence belongs to the PsaJ family.

Its subcellular location is the plastid. It localises to the chloroplast thylakoid membrane. Its function is as follows. May help in the organization of the PsaE and PsaF subunits. In Platanus occidentalis (Sycamore), this protein is Photosystem I reaction center subunit IX.